The sequence spans 241 residues: Ribulose-phosphate 3-epimerase 1 (241 aa).

S21 is a binding site for substrate. Positions 46, 48, and 79 each coordinate a divalent metal cation. Catalysis depends on D48, which acts as the Proton acceptor. Residues H79, 155 to 158 (GFGG), 192 to 194 (DGG), and 214 to 215 (GS) contribute to the substrate site. D192 lines the a divalent metal cation pocket. Residue D192 is the Proton donor of the active site.

Belongs to the ribulose-phosphate 3-epimerase family. A divalent metal cation is required as a cofactor.

It catalyses the reaction D-ribulose 5-phosphate = D-xylulose 5-phosphate. It functions in the pathway carbohydrate degradation. Its function is as follows. Catalyzes the reversible epimerization of D-ribulose 5-phosphate to D-xylulose 5-phosphate. In Cupriavidus necator (strain ATCC 17699 / DSM 428 / KCTC 22496 / NCIMB 10442 / H16 / Stanier 337) (Ralstonia eutropha), this protein is Ribulose-phosphate 3-epimerase 1.